We begin with the raw amino-acid sequence, 304 residues long: 33 kDa chaperonin (304 aa).

2 disulfide bridges follow: Cys-245-Cys-247 and Cys-278-Cys-281.

This sequence belongs to the HSP33 family. In terms of processing, under oxidizing conditions two disulfide bonds are formed involving the reactive cysteines. Under reducing conditions zinc is bound to the reactive cysteines and the protein is inactive.

The protein localises to the cytoplasm. Functionally, redox regulated molecular chaperone. Protects both thermally unfolding and oxidatively damaged proteins from irreversible aggregation. Plays an important role in the bacterial defense system toward oxidative stress. This Microcystis aeruginosa (strain NIES-843 / IAM M-2473) protein is 33 kDa chaperonin.